We begin with the raw amino-acid sequence, 373 residues long: Dual-specificity RNA methyltransferase RlmN (373 aa).

Glu-94 (proton acceptor) is an active-site residue. One can recognise a Radical SAM core domain in the interval 100–339; sequence EDDRATLCVS…VIVRKTRGDD (240 aa). A disulfide bridge links Cys-107 with Cys-344. Residues Cys-114, Cys-118, and Cys-121 each coordinate [4Fe-4S] cluster. S-adenosyl-L-methionine contacts are provided by residues 168–169, Ser-200, 222–224, and Asn-301; these read GE and SIH. Cys-344 serves as the catalytic S-methylcysteine intermediate.

It belongs to the radical SAM superfamily. RlmN family. [4Fe-4S] cluster is required as a cofactor.

The protein localises to the cytoplasm. It catalyses the reaction adenosine(2503) in 23S rRNA + 2 reduced [2Fe-2S]-[ferredoxin] + 2 S-adenosyl-L-methionine = 2-methyladenosine(2503) in 23S rRNA + 5'-deoxyadenosine + L-methionine + 2 oxidized [2Fe-2S]-[ferredoxin] + S-adenosyl-L-homocysteine. The enzyme catalyses adenosine(37) in tRNA + 2 reduced [2Fe-2S]-[ferredoxin] + 2 S-adenosyl-L-methionine = 2-methyladenosine(37) in tRNA + 5'-deoxyadenosine + L-methionine + 2 oxidized [2Fe-2S]-[ferredoxin] + S-adenosyl-L-homocysteine. Functionally, specifically methylates position 2 of adenine 2503 in 23S rRNA and position 2 of adenine 37 in tRNAs. m2A2503 modification seems to play a crucial role in the proofreading step occurring at the peptidyl transferase center and thus would serve to optimize ribosomal fidelity. The polypeptide is Dual-specificity RNA methyltransferase RlmN (Shewanella baltica (strain OS223)).